The following is a 239-amino-acid chain: NADH-quinone oxidoreductase chain 2 (239 aa).

Residues Cys-96, Cys-101, Cys-137, and Cys-141 each contribute to the [2Fe-2S] cluster site.

The protein belongs to the complex I 24 kDa subunit family. NDH-1 is composed of at least 14 different subunits, Nqo1 to Nqo14. The complex has a L-shaped structure, with the hydrophobic arm (subunits Nqo7, Nqo8, Nqo10 to Nqo14) embedded in the inner membrane and the hydrophilic peripheral arm (subunits Nqo1 to Nqo6, Nqo9) protruding into the bacterial cytoplasm. The hydrophilic domain contains all the redox centers. Requires [2Fe-2S] cluster as cofactor.

Its subcellular location is the cell inner membrane. It carries out the reaction a quinone + NADH + 5 H(+)(in) = a quinol + NAD(+) + 4 H(+)(out). Functionally, NDH-1 shuttles electrons from NADH, via FMN and iron-sulfur (Fe-S) centers, to quinones in the respiratory chain. The immediate electron acceptor for the enzyme in this species is believed to be ubiquinone. Couples the redox reaction to proton translocation (for every two electrons transferred, four hydrogen ions are translocated across the cytoplasmic membrane), and thus conserves the redox energy in a proton gradient. In Paracoccus denitrificans, this protein is NADH-quinone oxidoreductase chain 2 (nqo2).